Reading from the N-terminus, the 104-residue chain is Gastrin (104 aa).

Positions 1–21 are cleaved as a signal peptide; sequence MQRLCAHALILVLALAAFCEA. Positions 22-58 are excised as a propeptide; it reads SWKPHSQLQDAPVAPGANKGQEPLRMDRLGPASHPRR. Residues 26–70 form a disordered region; that stretch reads HSQLQDAPVAPGANKGQEPLRMDRLGPASHPRRQLGLQDPPHMVA. Tyr87 bears the Sulfotyrosine mark. A Phenylalanine amide modification is found at Phe92. Phosphoserine is present on Ser96. Positions 96-104 are excised as a propeptide; that stretch reads SAEEGDQHP.

It belongs to the gastrin/cholecystokinin family. Post-translationally, sulfation enhances proteolytic processing, and blocks peptide degradation. Levels of sulfation differ between proteolytically-cleaved gastrins and between tissues.

It localises to the secreted. Gastrin stimulates the stomach mucosa to produce and secrete hydrochloric acid and the pancreas to secrete its digestive enzymes. It also stimulates smooth muscle contraction and increases blood circulation and water secretion in the stomach and intestine. In Ovis aries (Sheep), this protein is Gastrin (GAST).